The following is a 102-amino-acid chain: MTLTLGHFLSLGAMLFALSVIGIFLNRKNLIVLLMAIELMLLAVNTNFVAFSYYLGDMHGQIFVFFILTVAAAESAIGLAILVLLFRNKSSINVDELNTLKG.

3 consecutive transmembrane segments (helical) span residues 5–25 (LGHF…GIFL), 31–51 (IVLL…FVAF), and 62–82 (IFVF…LAIL).

This sequence belongs to the complex I subunit 4L family. As to quaternary structure, NDH-1 is composed of 14 different subunits. Subunits NuoA, H, J, K, L, M, N constitute the membrane sector of the complex.

It is found in the cell inner membrane. The catalysed reaction is a quinone + NADH + 5 H(+)(in) = a quinol + NAD(+) + 4 H(+)(out). NDH-1 shuttles electrons from NADH, via FMN and iron-sulfur (Fe-S) centers, to quinones in the respiratory chain. The immediate electron acceptor for the enzyme in this species is believed to be ubiquinone. Couples the redox reaction to proton translocation (for every two electrons transferred, four hydrogen ions are translocated across the cytoplasmic membrane), and thus conserves the redox energy in a proton gradient. This Albidiferax ferrireducens (strain ATCC BAA-621 / DSM 15236 / T118) (Rhodoferax ferrireducens) protein is NADH-quinone oxidoreductase subunit K.